Consider the following 350-residue polypeptide: MKSADRFSPVKMEDAFANSLPTTPSLEVPVLTVSPADTSLQTKNVVAQTKPEEKKPAKKRKSWGQELPVPKTNLPPRKRAKTEDEKEQRRIERVLRNRAAAQTSRERKRLEMEKLESEKIDMEQQNQFLLQRLAQMEAENNRLSQQVAQLSAEVRGSRHSTPTSSSPASVSPTLTPTLFKQEGDEVPLDRIPFPTPSVTDYSPTLKPSSLAESPDLTQHPAVSVGGLEGDESALTLFDLGASIKHEPTHDLTAPLSDDDFRRLFNGDSSLESDSSLLEDGFAFDVLDSGDLSAFPFDSMVDFDTEPVTLEDLEQTNGLSDSASCKAASLQPSHGASTSRCDGQGIAAGSA.

The tract at residues 1 to 118 is disordered; sequence MKSADRFSPV…RLEMEKLESE (118 aa). Positions 35–47 are enriched in polar residues; the sequence is PADTSLQTKNVVA. Composition is skewed to basic and acidic residues over residues 81-95 and 104-118; these read KTED…ERVL and SRER…LESE. Positions 87–150 constitute a bZIP domain; sequence EQRRIERVLR…NRLSQQVAQL (64 aa). The interval 89–142 is basic motif; that stretch reads RRIERVLRNRAAAQTSRERKRLEMEKLESEKIDMEQQNQFLLQRLAQMEAENNR. Residues 143-150 form a leucine-zipper region; the sequence is LSQQVAQL. 3 disordered regions span residues 152–175, 194–218, and 328–350; these read AEVR…PTLT, PTPS…DLTQ, and SLQP…AGSA. Residues 160 to 175 show a composition bias toward low complexity; it reads STPTSSSPASVSPTLT. Composition is skewed to polar residues over residues 196 to 211 and 329 to 340; these read PSVT…SSLA and LQPSHGASTSRC.

It belongs to the bZIP family. In terms of assembly, homodimer.

It localises to the nucleus. Transcriptional activator involved in the unfolded protein response (UPR) pathway. Recognizes and binds to the UPR element (UPRE) in the promoter of UPR-regulated genes. Increases the synthesis of endoplasmic reticulum-resident proteins required for protein folding as well as components of the secretory pathway. This is Transcriptional activator hacA (hacA) from Emericella nidulans (strain FGSC A4 / ATCC 38163 / CBS 112.46 / NRRL 194 / M139) (Aspergillus nidulans).